The primary structure comprises 344 residues: Arginine N-succinyltransferase (344 aa).

Leu-125 contacts succinyl-CoA. His-229 (proton donor) is an active-site residue.

It belongs to the arginine N-succinyltransferase family.

The catalysed reaction is succinyl-CoA + L-arginine = N(2)-succinyl-L-arginine + CoA + H(+). It participates in amino-acid degradation; L-arginine degradation via AST pathway; L-glutamate and succinate from L-arginine: step 1/5. Functionally, catalyzes the transfer of succinyl-CoA to arginine to produce N(2)-succinylarginine. This chain is Arginine N-succinyltransferase, found in Escherichia coli O157:H7.